Here is a 78-residue protein sequence, read N- to C-terminus: Delta-conotoxin-like CVIE (78 aa).

The first 22 residues, 1–22 (MKLTCMMIVAVLFLTAWTFVTA), serve as a signal peptide directing secretion. Positions 23–49 (DDSRNGLKNLFPKARHEMKNPEASKLN) are excised as a propeptide. Cystine bridges form between Cys-54–Cys-69, Cys-61–Cys-73, and Cys-68–Cys-77. Position 65 is a 4-hydroxyproline (Pro-65).

The protein belongs to the conotoxin O1 superfamily. As to expression, expressed by the venom duct.

Its subcellular location is the secreted. Delta-conotoxins bind to site 6 of voltage-gated sodium channels (Nav) and inhibit the inactivation process. The polypeptide is Delta-conotoxin-like CVIE (Conus catus (Cat cone)).